A 481-amino-acid chain; its full sequence is 6-phosphogluconate dehydrogenase, decarboxylating (481 aa).

Residues 11–16 (GLAVMG), 34–36 (NRT), 76–78 (VKA), and N104 each bind NADP(+). Substrate contacts are provided by residues N104 and 130–132 (SGG). K184 acts as the Proton acceptor in catalysis. 187–188 (HN) is a substrate binding site. E191 functions as the Proton donor in the catalytic mechanism. Y192, K259, R286, R445, and H451 together coordinate substrate.

It belongs to the 6-phosphogluconate dehydrogenase family. Homodimer.

It carries out the reaction 6-phospho-D-gluconate + NADP(+) = D-ribulose 5-phosphate + CO2 + NADPH. It functions in the pathway carbohydrate degradation; pentose phosphate pathway; D-ribulose 5-phosphate from D-glucose 6-phosphate (oxidative stage): step 3/3. Functionally, catalyzes the oxidative decarboxylation of 6-phosphogluconate to ribulose 5-phosphate and CO(2), with concomitant reduction of NADP to NADPH. The protein is 6-phosphogluconate dehydrogenase, decarboxylating (Pgd) of Ceratitis capitata (Mediterranean fruit fly).